A 345-amino-acid polypeptide reads, in one-letter code: UbiA prenyltransferase domain-containing protein 1 (345 aa).

Transmembrane regions (helical) follow at residues 60-80 (LALRPWSFSASLIPVALGTAI), 90-110 (LLLFVVCAVAVLAVHGAGNLV), 141-161 (VRFGVFLYTLGCLCAACLYFI), 169-189 (LALIYFGGLSSSFLYTGGIGF), 213-233 (AVQVGYLAVTPLLYAVPLALS), 251-273 (QAGIVTLAILVGPMFSYMLYNLL), 285-305 (ATRYTISMALPLLTIPLAFSL), and 324-344 (LNLLVGLFYVFGIVLAPAGSL).

It belongs to the UbiA prenyltransferase family.

The protein resides in the endoplasmic reticulum membrane. It localises to the golgi apparatus membrane. It is found in the mitochondrion membrane. The enzyme catalyses menadiol + (2E,6E,10E)-geranylgeranyl diphosphate = menaquinol-4 + diphosphate. It catalyses the reaction all-trans-decaprenyl diphosphate + 4-hydroxybenzoate = 4-hydroxy-3-(all-trans-decaprenyl)benzoate + diphosphate. It participates in quinol/quinone metabolism; menaquinone biosynthesis. It functions in the pathway cofactor biosynthesis; ubiquinone biosynthesis. Its function is as follows. Prenyltransferase that mediates the formation of menaquinone-4 (MK-4) and coenzyme Q10. MK-4 is a vitamin K2 isoform required for endothelial cell development. Mediates the conversion of phylloquinone (PK) into MK-4, probably by cleaving the side chain of phylloquinone (PK) to release 2-methyl-1,4-naphthoquinone (menadione; K3) and then prenylating it with geranylgeranyl pyrophosphate (GGPP) to form MK-4. Also plays a role in cardiovascular development independently of MK-4 biosynthesis, by acting as a coenzyme Q10 biosynthetic enzyme: coenzyme Q10, also named ubiquinone, plays an important antioxidant role in the cardiovascular system. Mediates biosynthesis of coenzyme Q10 in the Golgi membrane, leading to protect cardiovascular tissues from NOS3/eNOS-dependent oxidative stress. The sequence is that of UbiA prenyltransferase domain-containing protein 1 (ubiad1) from Xenopus tropicalis (Western clawed frog).